The primary structure comprises 71 residues: Small, acid-soluble spore protein I (71 aa).

Belongs to the SspI family.

It localises to the spore core. This Geobacillus sp. (strain WCH70) protein is Small, acid-soluble spore protein I.